We begin with the raw amino-acid sequence, 492 residues long: 2,3-bisphosphoglycerate-independent phosphoglycerate mutase (492 aa).

Residues aspartate 11 and serine 61 each coordinate Mn(2+). Serine 61 (phosphoserine intermediate) is an active-site residue. Substrate-binding positions include histidine 118, 147 to 148, arginine 178, arginine 184, 248 to 251, and lysine 320; these read RD and RNDR. The Mn(2+) site is built by aspartate 386, histidine 390, aspartate 427, histidine 428, and histidine 445.

It belongs to the BPG-independent phosphoglycerate mutase family. Monomer. Mn(2+) is required as a cofactor.

The catalysed reaction is (2R)-2-phosphoglycerate = (2R)-3-phosphoglycerate. The protein operates within carbohydrate degradation; glycolysis; pyruvate from D-glyceraldehyde 3-phosphate: step 3/5. In terms of biological role, catalyzes the interconversion of 2-phosphoglycerate and 3-phosphoglycerate. The chain is 2,3-bisphosphoglycerate-independent phosphoglycerate mutase from Campylobacter jejuni subsp. jejuni serotype O:23/36 (strain 81-176).